Consider the following 94-residue polypeptide: MARMVFCEYLKKEAEGLDFQLYPGELGKRIFNSISKQAWAEWIKKQTMLVNEKKLNMMNPEHRQLLEAEMVNFLFEGKDVHIDGYVPVQTNTKA.

This sequence belongs to the Fe(2+)-trafficking protein family.

Functionally, could be a mediator in iron transactions between iron acquisition and iron-requiring processes, such as synthesis and/or repair of Fe-S clusters in biosynthetic enzymes. The protein is Probable Fe(2+)-trafficking protein of Haemophilus ducreyi (strain 35000HP / ATCC 700724).